Consider the following 307-residue polypeptide: Bifunctional protein FolD 3 (307 aa).

NADP(+) contacts are provided by residues 169-171, Ser194, and Ile235; that span reads GRS.

It belongs to the tetrahydrofolate dehydrogenase/cyclohydrolase family. In terms of assembly, homodimer.

The catalysed reaction is (6R)-5,10-methylene-5,6,7,8-tetrahydrofolate + NADP(+) = (6R)-5,10-methenyltetrahydrofolate + NADPH. It catalyses the reaction (6R)-5,10-methenyltetrahydrofolate + H2O = (6R)-10-formyltetrahydrofolate + H(+). It functions in the pathway one-carbon metabolism; tetrahydrofolate interconversion. Its function is as follows. Catalyzes the oxidation of 5,10-methylenetetrahydrofolate to 5,10-methenyltetrahydrofolate and then the hydrolysis of 5,10-methenyltetrahydrofolate to 10-formyltetrahydrofolate. In Ectopseudomonas mendocina (strain ymp) (Pseudomonas mendocina), this protein is Bifunctional protein FolD 3.